The chain runs to 161 residues: Peroxynitrite isomerase 2 (161 aa).

Positions 17 to 23 (GTWAGQG) match the GXWXGXG motif. Histidine 152 serves as a coordination point for heme b.

The protein belongs to the nitrobindin family. Homodimer. Heme b is required as a cofactor.

The catalysed reaction is peroxynitrite = nitrate. Its pathway is nitrogen metabolism. Heme-binding protein able to scavenge peroxynitrite and to protect free L-tyrosine against peroxynitrite-mediated nitration, by acting as a peroxynitrite isomerase that converts peroxynitrite to nitrate. Therefore, this protein likely plays a role in peroxynitrite sensing and in the detoxification of reactive nitrogen and oxygen species (RNS and ROS, respectively). Is able to bind nitric oxide (NO) in vitro, but may act as a sensor of peroxynitrite levels in vivo. This Mycobacterium ulcerans (strain Agy99) protein is Peroxynitrite isomerase 2.